The following is a 796-amino-acid chain: Armadillo repeat-containing protein wrm-1 (796 aa).

Positions 17–59 are disordered; that stretch reads NFNPMTPSTSRVSTPVRPSSTMSARQYSGSPFKAQPQNMEPSN. The ARM repeat unit spans residues 462–504; sequence ESIHCIVQLIGCSDVTIVELATGTLRNIGLHNKMNKAFMVQDG.

As to quaternary structure, interacts (independently of ARM repeat) with nhr-25. Component of the beta-catenin-lit-1 complex (also called the lit-1/wrm-1 complex or the wrm-1/lit-1 kinase complex) at least composed of lit-1 and wrm-1. Interacts (via N-terminus) with lit-1; the interaction is direct and activates lit-1 kinase activity which leads to the phosphorylation of pop-1. This promotes pop-1 interaction with par-5 and translocation of pop-1 from the nucleus to the cytoplasm.

The protein resides in the cytoplasm. Its subcellular location is the cell cortex. It is found in the nucleus. Functionally, antagonistic role in the Wnt signaling pathway that operates in embryogenesis. When located at the cortex it has been shown to inhibit Wnt signaling during asymmetric cell division but when relocated to the nucleus it shows positive regulation. Has a role in blastomere signaling during endoderm specification. Component of the beta-catenin-lit-1 complex which promotes phosphorylation, down-regulation and subcellular relocation of pop-1. Within the complex, activates lit-1-dependent kinase activity. Can substitute for bar-1 indicating functional redundancy. Appears to have a role in centrosome positioning and can activation transcription in yeast. Involved in the development of distal tip cells (DTC) by regulating the asymmetric distribution of cye-1 and cki-1 between the daughters of Z1.a and Z4.p cells. This Caenorhabditis elegans protein is Armadillo repeat-containing protein wrm-1.